The following is a 79-amino-acid chain: Probable Fe(2+)-trafficking protein (79 aa).

This sequence belongs to the Fe(2+)-trafficking protein family. As to quaternary structure, monomer.

In terms of biological role, could be a mediator in iron transactions between iron acquisition and iron-requiring processes, such as synthesis and/or repair of Fe-S clusters in biosynthetic enzymes. The polypeptide is Probable Fe(2+)-trafficking protein (Blochmanniella floridana).